A 242-amino-acid polypeptide reads, in one-letter code: Probable 2-phosphosulfolactate phosphatase (242 aa).

Belongs to the ComB family. Mg(2+) is required as a cofactor.

The catalysed reaction is (2R)-O-phospho-3-sulfolactate + H2O = (2R)-3-sulfolactate + phosphate. In Caldicellulosiruptor saccharolyticus (strain ATCC 43494 / DSM 8903 / Tp8T 6331), this protein is Probable 2-phosphosulfolactate phosphatase.